The sequence spans 349 residues: DNA-directed RNA polymerase subunit alpha (349 aa).

The segment at 1–226 (MLIAQRPTLI…GLFGLAQELN (226 aa)) is alpha N-terminal domain (alpha-NTD). The tract at residues 241 to 349 (AALAADLALP…GAEFIETEQY (109 aa)) is alpha C-terminal domain (alpha-CTD). Positions 309–349 (KDSPPGFDPRQAVDTYGTDAYSPSFSDPSDDGAEFIETEQY) are disordered. Acidic residues predominate over residues 336–349 (PSDDGAEFIETEQY).

It belongs to the RNA polymerase alpha chain family. As to quaternary structure, homodimer. The RNAP catalytic core consists of 2 alpha, 1 beta, 1 beta' and 1 omega subunit. When a sigma factor is associated with the core the holoenzyme is formed, which can initiate transcription.

The enzyme catalyses RNA(n) + a ribonucleoside 5'-triphosphate = RNA(n+1) + diphosphate. Functionally, DNA-dependent RNA polymerase catalyzes the transcription of DNA into RNA using the four ribonucleoside triphosphates as substrates. This Frankia casuarinae (strain DSM 45818 / CECT 9043 / HFP020203 / CcI3) protein is DNA-directed RNA polymerase subunit alpha.